A 256-amino-acid polypeptide reads, in one-letter code: MSNLTARVIPCLDIKDGRVVKGVNFVNLVDAGDPVESAAIYEENLADELCFLDITASSDRREILLHLVERIAEKIFIPFTVGGGIRTVDDVKAVLEKGADKVSINTAAFQNPKLLTYSSEIYGSQCIVCAIDVKHEKERDRYEVFLHGGRTATGREALDWAQEAAEKGAGEILLTSMDRDGTRNGFDIHLLKNFSSSLGIPIIASGGAGNPEHMVEAILRGKADAVLAASIFHFGEYSIRETKKAMEEMGISVRLD.

Residues Asp13 and Asp132 contribute to the active site.

Belongs to the HisA/HisF family. As to quaternary structure, heterodimer of HisH and HisF.

The protein resides in the cytoplasm. The enzyme catalyses 5-[(5-phospho-1-deoxy-D-ribulos-1-ylimino)methylamino]-1-(5-phospho-beta-D-ribosyl)imidazole-4-carboxamide + L-glutamine = D-erythro-1-(imidazol-4-yl)glycerol 3-phosphate + 5-amino-1-(5-phospho-beta-D-ribosyl)imidazole-4-carboxamide + L-glutamate + H(+). The protein operates within amino-acid biosynthesis; L-histidine biosynthesis; L-histidine from 5-phospho-alpha-D-ribose 1-diphosphate: step 5/9. Functionally, IGPS catalyzes the conversion of PRFAR and glutamine to IGP, AICAR and glutamate. The HisF subunit catalyzes the cyclization activity that produces IGP and AICAR from PRFAR using the ammonia provided by the HisH subunit. This is Imidazole glycerol phosphate synthase subunit HisF from Leptospira interrogans serogroup Icterohaemorrhagiae serovar copenhageni (strain Fiocruz L1-130).